The following is a 96-amino-acid chain: Muconolactone Delta-isomerase (96 aa).

The protein belongs to the muconolactone Delta-isomerase family. Homodecamer.

The catalysed reaction is (S)-muconolactone = (4,5-dihydro-5-oxofuran-2-yl)-acetate. It functions in the pathway aromatic compound metabolism; beta-ketoadipate pathway; 5-oxo-4,5-dihydro-2-furylacetate from catechol: step 3/3. The chain is Muconolactone Delta-isomerase (catC) from Pseudomonas putida (Arthrobacter siderocapsulatus).